Consider the following 238-residue polypeptide: HTH-type transcriptional regulator TreR (238 aa).

The 71-residue stretch at 1–71 (MKVNKFITIY…RGKGSVVLNR (71 aa)) folds into the HTH gntR-type domain. A DNA-binding region (H-T-H motif) is located at residues 31–50 (EHELTAQYGTSRETVRKALH).

In terms of assembly, dimer of dimers.

Functionally, repressor for the trePA operon. It is able to bind trehalose-6-phosphate. This is HTH-type transcriptional regulator TreR (treR) from Bacillus subtilis (strain 168).